A 998-amino-acid polypeptide reads, in one-letter code: MTTDVAPGTMENETSKVMSLKHKAAYVPPPIPHVEMNQLPLSLLLRNLTVFTAKEISQFFKLNVHTGGKTPFEKKLELLNMILFLRNQFLKLYVLVKWAKTLKQNNFHSLIDLLNWFRNANMQVNNCTMALKQILGTMAGAKLPNPDLATSLEVLMLGRPNLPNHGFNLNGSQSDNLTIPNKLILKRLRDLNTCLSIKISLMTIPSQLAKYEIKDGRIVFTVKDEFELQLSTIDQNSPLFFVNINLLFNERLPLNLARLEKHINEILFKSTNPLCLVYQFLHKYILTLQMYMIHVELNALGLNGKYSGGHLVHNYDSKKQIITIKYWLQSKIANTCKCVVGMDKETESIVLEWQNPDVNKETVTTRYHGLLNNIESIIDEITFNHAQMIRADLLRTDTFQEDNEDTTSTSLLFQIPTTCATVSQIQLKIDQVSGIFYFHNPSNLLLSYARQINQSSNTQDLITVLGRLKLDKVDSILRHMLDKTGWICSDVVRLKSSIVPSTDSTFSKDIFVKLKDWPSNWFLVLTIISSTNTCIVEKRIGKILSVKGVWKLKYMDKKNVITSKLDTMTYPKMLTLQISILNKIVNHMIIDSLNELKIKNKICTFTTEDSNILPPYIIRKDGKENTDNITVIALGLESFLEGSKALNTILESSMLLKIDYQKMDIELYGKFKTDNEMIRCQCDELSIKFLEEDSLSFFMSENFGNLNDIMLYLSKFRKKLTQLIALTDVMDTLHSNFQSMDFRVVELRPNEIRFKYLPMKDSPDNEDCVIRIVTNQEKVEKLDIKLSEHNPQAMIQRFLDEKEGFAHNFIFHYLQFTLPLFRASKEADYTSSSPSTVKMHLFMHSLQEFHFLYRNHKVGGELSFIIQLRSVVRTRHQENTQYFVRFAQDYSQPQLQQQHPLSKAIAEIQKNAFSLALLKEQNSNTTSSTTTAGTATAGATMISTASSNKLLDLQDSSPTNAAVDWSSIKCVRLGSALACSHDQILPLLLQFHKSISDC.

It belongs to the Mediator complex subunit 14 family. Component of the Mediator complex.

It localises to the nucleus. Its function is as follows. Component of the Mediator complex, a coactivator involved in the regulated transcription of nearly all RNA polymerase II-dependent genes. Mediator functions as a bridge to convey information from gene-specific regulatory proteins to the basal RNA polymerase II transcription machinery. Mediator is recruited to promoters by direct interactions with regulatory proteins and serves as a scaffold for the assembly of a functional preinitiation complex with RNA polymerase II and the general transcription factors. This is Mediator of RNA polymerase II transcription subunit 14 (RGR1) from Kluyveromyces lactis (strain ATCC 8585 / CBS 2359 / DSM 70799 / NBRC 1267 / NRRL Y-1140 / WM37) (Yeast).